A 374-amino-acid polypeptide reads, in one-letter code: Patatin-2-Kuras 1 (374 aa).

A signal peptide spans 1-11 (MILATTGSTCA). One can recognise a PNPLA domain in the interval 20 to 217 (LSIDGGGIKG…TVGDPALLSL (198 aa)). Residues 24-29 (GGGIKG) carry the GXGXXG motif. A GXSXG motif is present at residues 63 to 67 (GTSTG). Catalysis depends on Ser-65, which acts as the Nucleophile. Asn-103 carries an N-linked (GlcNAc...) asparagine glycan. The Proton acceptor role is filled by Asp-203. The short motif at 203–205 (DGA) is the DGA/G element. The stretch at 309–372 (ENALTGTTTE…DRKKLRANKA (64 aa)) forms a coiled coil.

The protein belongs to the patatin family. In terms of tissue distribution, tuber.

Its subcellular location is the vacuole. Functionally, probable lipolytic acyl hydrolase (LAH), an activity which is thought to be involved in the response of tubers to pathogens. The sequence is that of Patatin-2-Kuras 1 (pat2-k1) from Solanum tuberosum (Potato).